The chain runs to 175 residues: CDP-archaeol synthase (175 aa).

The next 4 helical transmembrane spans lie at 41–61 (GFFVGLIFGALAGLMQMQLLE), 82–102 (TILIFALAVGSLFGDMFMSFF), 122–142 (FVLGALIFAYLASPVWFAEQF), and 147–167 (IAVILIITPLLHLATNVVGYF).

This sequence belongs to the CDP-archaeol synthase family. Mg(2+) serves as cofactor.

It is found in the cell membrane. The enzyme catalyses 2,3-bis-O-(geranylgeranyl)-sn-glycerol 1-phosphate + CTP + H(+) = CDP-2,3-bis-O-(geranylgeranyl)-sn-glycerol + diphosphate. It functions in the pathway membrane lipid metabolism; glycerophospholipid metabolism. Its function is as follows. Catalyzes the formation of CDP-2,3-bis-(O-geranylgeranyl)-sn-glycerol (CDP-archaeol) from 2,3-bis-(O-geranylgeranyl)-sn-glycerol 1-phosphate (DGGGP) and CTP. This reaction is the third ether-bond-formation step in the biosynthesis of archaeal membrane lipids. This Methanococcoides burtonii (strain DSM 6242 / NBRC 107633 / OCM 468 / ACE-M) protein is CDP-archaeol synthase.